The chain runs to 275 residues: Formamidopyrimidine-DNA glycosylase (275 aa).

P2 (schiff-base intermediate with DNA) is an active-site residue. Catalysis depends on E3, which acts as the Proton donor. Catalysis depends on K58, which acts as the Proton donor; for beta-elimination activity. 2 residues coordinate DNA: H91 and R110. Residues 238–272 (QVYGQTGKPCPRCGQAIVKLKVGGRGTHICPKCQK) form an FPG-type zinc finger. The active-site Proton donor; for delta-elimination activity is the R262.

The protein belongs to the FPG family. Monomer. Zn(2+) serves as cofactor.

It carries out the reaction Hydrolysis of DNA containing ring-opened 7-methylguanine residues, releasing 2,6-diamino-4-hydroxy-5-(N-methyl)formamidopyrimidine.. The enzyme catalyses 2'-deoxyribonucleotide-(2'-deoxyribose 5'-phosphate)-2'-deoxyribonucleotide-DNA = a 3'-end 2'-deoxyribonucleotide-(2,3-dehydro-2,3-deoxyribose 5'-phosphate)-DNA + a 5'-end 5'-phospho-2'-deoxyribonucleoside-DNA + H(+). In terms of biological role, involved in base excision repair of DNA damaged by oxidation or by mutagenic agents. Acts as a DNA glycosylase that recognizes and removes damaged bases. Has a preference for oxidized purines, such as 7,8-dihydro-8-oxoguanine (8-oxoG). Has AP (apurinic/apyrimidinic) lyase activity and introduces nicks in the DNA strand. Cleaves the DNA backbone by beta-delta elimination to generate a single-strand break at the site of the removed base with both 3'- and 5'-phosphates. This Streptococcus pyogenes serotype M6 (strain ATCC BAA-946 / MGAS10394) protein is Formamidopyrimidine-DNA glycosylase.